A 591-amino-acid polypeptide reads, in one-letter code: 4-coumarate--CoA ligase-like 3 (591 aa).

Residues Ser-228, Ser-229, Gly-230, Thr-231, Ser-232, and Lys-236 each contribute to the ATP site. Position 280 (Tyr-280) interacts with (E)-4-coumaroyl-AMP. Position 301 (Arg-301) interacts with CoA. Residues 303–375 (DAGDAVAAIG…QAFPHVDFIQ (73 aa)) form an SBD1 region. (E)-4-coumaroyl-AMP is bound by residues Ala-353, Gln-375, Gly-376, and Thr-380. ATP contacts are provided by Gln-375, Gly-376, Thr-380, Asp-459, and Arg-474. An SBD2 region spans residues 376–440 (GYGMTESTAV…LHGPGIMKGY (65 aa)). The (E)-4-coumaroyl-AMP site is built by Lys-476 and Lys-480. CoA-binding residues include Lys-482 and Gly-483. Lys-565 serves as a coordination point for ATP.

The protein belongs to the ATP-dependent AMP-binding enzyme family. Requires Mg(2+) as cofactor.

It catalyses the reaction (E)-4-coumarate + ATP + CoA = (E)-4-coumaroyl-CoA + AMP + diphosphate. The enzyme catalyses (E)-4-coumarate + ATP + H(+) = (E)-4-coumaroyl-AMP + diphosphate. It carries out the reaction (E)-4-coumaroyl-AMP + CoA = (E)-4-coumaroyl-CoA + AMP + H(+). In terms of biological role, carboxylate--CoA ligase that may use 4-coumarate as substrate. Follows a two-step reaction mechanism, wherein the carboxylate substrate first undergoes adenylation by ATP, followed by a thioesterification in the presence of CoA to yield the final CoA thioester. In Oryza sativa subsp. japonica (Rice), this protein is 4-coumarate--CoA ligase-like 3 (4CLL3).